The primary structure comprises 191 residues: Adenylate kinase (191 aa).

Position 12-17 (Gly12–Thr17) interacts with ATP. The NMP stretch occupies residues Ser34–Val63. AMP-binding positions include Thr35, Arg40, Glu61–Val63, Gly88–Arg91, and Gln95. Residues Gly130 to Asp136 are LID. Arg131 provides a ligand contact to ATP. The AMP site is built by Arg133 and Arg145. ATP is bound at residue Arg173.

Belongs to the adenylate kinase family. In terms of assembly, monomer.

Its subcellular location is the cytoplasm. It carries out the reaction AMP + ATP = 2 ADP. The protein operates within purine metabolism; AMP biosynthesis via salvage pathway; AMP from ADP: step 1/1. Functionally, catalyzes the reversible transfer of the terminal phosphate group between ATP and AMP. Plays an important role in cellular energy homeostasis and in adenine nucleotide metabolism. This Helicobacter pylori (strain ATCC 700392 / 26695) (Campylobacter pylori) protein is Adenylate kinase.